A 290-amino-acid polypeptide reads, in one-letter code: Short chain dehydrogenase andI (290 aa).

The NADP(+) site is built by I35, N120, R154, Y186, K190, V219, and T221. Y186 acts as the Proton acceptor in catalysis. K190 (lowers pKa of active site Tyr) is an active-site residue.

It belongs to the short-chain dehydrogenases/reductases (SDR) family.

Its pathway is secondary metabolite biosynthesis; terpenoid biosynthesis. Its function is as follows. Short chain dehydrogenase; part of the gene cluster that mediates the biosynthesis of anditomin, a fungal meroterpenoid. The first step of the pathway is the synthesis of 3,5-dimethylorsellinic acid (DMOA) by the polyketide synthase andM. DMOA is then converted to the phthalide compound 5,7-dihydroxy-4,6-dimethylphthalide (DHDMP) by the cytochrome P450 monooxygenase andK, which is further prenylated by the prenyltransferase andD to yield farnesyl-DHDMP. Further epoxidation by the FAD-dependent monooxygenase andE leads to epoxyfarnesyl-DHDMP. The next step involves the terpene cyclase andB that converts epoxyfarnesyl-DHDMP into preandiloid A through opening of the epoxide ring followed by the cyclization of the farnesyl moiety. Preandiloid A is in turn oxidized at the C-3 hydroxyl group to yield preandiloid B by the dehydrogenase andC. The dioxygenase andA is solely responsible for the dehydrogenation of preandiloid B leading to the enone preandiloid C, as well as for the intriguing structural rearrangement to generate the bicyclo[2.2.2]octane core, transforming preandiloid C into andiconin. FAD-binding monooxygenase andJ then produces andilesin D which is reduced by dehydrogenase andI to yield andilesin A. Action of acetyltransferase andG followed by a spontaneous acetate elimination leads then to andilesin B, which is in turn substrate of the short chain dehydrogenase andH to yield andilesin C. Finally, the dioxygenase andF catalyzes the transformation of andilesin C to anditomin. The sequence is that of Short chain dehydrogenase andI from Emericella variicolor (Aspergillus stellatus).